The chain runs to 338 residues: Very-long-chain 3-oxoacyl-CoA reductase (338 aa).

Residues 20 to 40 (LSAFLLVMGSIGVGRVIYQTL) traverse the membrane as a helical segment. NADP(+) contacts are provided by Val66, Asn95, Asp120, Asn147, Tyr214, Lys218, Val247, and Ser249. Tyr214 acts as the Proton donor in catalysis. Lys218 acts as the Lowers pKa of active site Tyr in catalysis.

It belongs to the short-chain dehydrogenases/reductases (SDR) family.

It is found in the endoplasmic reticulum membrane. The enzyme catalyses a very-long-chain (3R)-3-hydroxyacyl-CoA + NADP(+) = a very-long-chain 3-oxoacyl-CoA + NADPH + H(+). It functions in the pathway lipid metabolism; fatty acid biosynthesis. Its function is as follows. Component of the microsomal membrane bound fatty acid elongation system, which produces the 26-carbon very long-chain fatty acids (VLCFA) from palmitate. Catalyzes the reduction of the 3-ketoacyl-CoA intermediate that is formed in each cycle of fatty acid elongation. VLCFAs serve as precursors for ceramide and sphingolipids. In Laccaria bicolor (strain S238N-H82 / ATCC MYA-4686) (Bicoloured deceiver), this protein is Very-long-chain 3-oxoacyl-CoA reductase.